A 434-amino-acid chain; its full sequence is Polyadenylate-binding protein RBP47C' (434 aa).

A disordered region spans residues 1 to 50 (MADVKVQSESESSDSHPLVDYQSLPPYPPPHPPVEVEENQPKTSPTPPPP). 3 consecutive RRM domains span residues 103 to 185 (KTIW…WASF), 199 to 278 (LSIF…PATP), and 306 to 378 (TTIF…WGRN).

This sequence belongs to the polyadenylate-binding RBP47 family. As to quaternary structure, interacts with the poly(A) tail of mRNA in nucleus.

The protein resides in the nucleus. The protein localises to the cytoplasmic granule. Its function is as follows. Heterogeneous nuclear ribonucleoprotein (hnRNP)-protein binding the poly(A) tail of mRNA and probably involved in some steps of pre-mRNA maturation. This Arabidopsis thaliana (Mouse-ear cress) protein is Polyadenylate-binding protein RBP47C' (RBP47C').